The following is a 255-amino-acid chain: Putative cysteine-rich repeat secretory protein 13 (255 aa).

A signal peptide spans 1 to 21 (MSSNILAMVAMQLLLIRIVSS). Gnk2-homologous domains follow at residues 28–136 (YLNH…SVNT) and 142–252 (YDSF…LYPF).

Belongs to the cysteine-rich repeat secretory protein family.

Its subcellular location is the secreted. In Arabidopsis thaliana (Mouse-ear cress), this protein is Putative cysteine-rich repeat secretory protein 13 (CRRSP13).